The primary structure comprises 144 residues: Superoxide dismutase [Mn], mitochondrial (144 aa).

Residues His-10, His-58, and Asp-143 each contribute to the Mn(2+) site.

This sequence belongs to the iron/manganese superoxide dismutase family. As to quaternary structure, homotetramer. It depends on Mn(2+) as a cofactor.

It localises to the mitochondrion matrix. It catalyses the reaction 2 superoxide + 2 H(+) = H2O2 + O2. Its function is as follows. Destroys superoxide anion radicals which are normally produced within the cells and which are toxic to biological systems. The polypeptide is Superoxide dismutase [Mn], mitochondrial (Branchiostoma floridae (Florida lancelet)).